A 227-amino-acid polypeptide reads, in one-letter code: Peroxiredoxin-like 2A (227 aa).

The thioredoxin fold stretch occupies residues 13–111 (LWSISIGAFG…DQLGVPLYAV (99 aa)). Active-site redox-active residues include C84 and C87.

It belongs to the peroxiredoxin-like PRXL2 family. PRXL2A subfamily.

It localises to the cytoplasm. Its function is as follows. Involved in redox regulation of the cell. Acts as an antioxidant. The protein is Peroxiredoxin-like 2A (prxl2a) of Xenopus tropicalis (Western clawed frog).